Reading from the N-terminus, the 428-residue chain is Enolase (428 aa).

Q165 is a (2R)-2-phosphoglycerate binding site. E207 functions as the Proton donor in the catalytic mechanism. The Mg(2+) site is built by D244, E283, and D310. Residues K335, R364, S365, and K386 each contribute to the (2R)-2-phosphoglycerate site. K335 (proton acceptor) is an active-site residue.

Belongs to the enolase family. Mg(2+) serves as cofactor.

It localises to the cytoplasm. The protein localises to the secreted. It is found in the cell surface. It catalyses the reaction (2R)-2-phosphoglycerate = phosphoenolpyruvate + H2O. It participates in carbohydrate degradation; glycolysis; pyruvate from D-glyceraldehyde 3-phosphate: step 4/5. In terms of biological role, catalyzes the reversible conversion of 2-phosphoglycerate (2-PG) into phosphoenolpyruvate (PEP). It is essential for the degradation of carbohydrates via glycolysis. The chain is Enolase from Chlamydia pneumoniae (Chlamydophila pneumoniae).